Here is a 458-residue protein sequence, read N- to C-terminus: Argininosuccinate lyase (458 aa).

It belongs to the lyase 1 family. Argininosuccinate lyase subfamily.

It localises to the cytoplasm. It catalyses the reaction 2-(N(omega)-L-arginino)succinate = fumarate + L-arginine. Its pathway is amino-acid biosynthesis; L-arginine biosynthesis; L-arginine from L-ornithine and carbamoyl phosphate: step 3/3. This is Argininosuccinate lyase from Geobacter sulfurreducens (strain ATCC 51573 / DSM 12127 / PCA).